The chain runs to 115 residues: NAD(P)H-quinone oxidoreductase subunit M (115 aa).

Belongs to the complex I NdhM subunit family. In terms of assembly, NDH-1 can be composed of about 15 different subunits; different subcomplexes with different compositions have been identified which probably have different functions.

It is found in the cellular thylakoid membrane. It carries out the reaction a plastoquinone + NADH + (n+1) H(+)(in) = a plastoquinol + NAD(+) + n H(+)(out). The catalysed reaction is a plastoquinone + NADPH + (n+1) H(+)(in) = a plastoquinol + NADP(+) + n H(+)(out). Functionally, NDH-1 shuttles electrons from an unknown electron donor, via FMN and iron-sulfur (Fe-S) centers, to quinones in the respiratory and/or the photosynthetic chain. The immediate electron acceptor for the enzyme in this species is believed to be plastoquinone. Couples the redox reaction to proton translocation, and thus conserves the redox energy in a proton gradient. Cyanobacterial NDH-1 also plays a role in inorganic carbon-concentration. The polypeptide is NAD(P)H-quinone oxidoreductase subunit M (Prochlorococcus marinus (strain MIT 9312)).